The chain runs to 311 residues: Ribonuclease HIII (311 aa).

Positions M95–K311 constitute an RNase H type-2 domain. Residues D101, E102, and D206 each contribute to the a divalent metal cation site.

The protein belongs to the RNase HII family. RnhC subfamily. Mn(2+) is required as a cofactor. Mg(2+) serves as cofactor.

The protein localises to the cytoplasm. The enzyme catalyses Endonucleolytic cleavage to 5'-phosphomonoester.. Its function is as follows. Endonuclease that specifically degrades the RNA of RNA-DNA hybrids. This Bacillus cereus (strain ZK / E33L) protein is Ribonuclease HIII.